A 63-amino-acid polypeptide reads, in one-letter code: Ferredoxin (63 aa).

Residues 3–31 (WKVSVDVDTCIGDAICASLCPDVFEMGDD) form the 4Fe-4S ferredoxin-type domain. Residues Cys12, Asp15, and Cys18 each contribute to the [4Fe-4S] cluster site. Cys22 and Cys45 form a disulfide bridge. Cys53 provides a ligand contact to [4Fe-4S] cluster.

Requires [4Fe-4S] cluster as cofactor. The cofactor is [3Fe-4S] cluster.

In terms of biological role, ferredoxins are iron-sulfur proteins that transfer electrons in a wide variety of metabolic reactions. This Thermococcus kodakarensis (strain ATCC BAA-918 / JCM 12380 / KOD1) (Pyrococcus kodakaraensis (strain KOD1)) protein is Ferredoxin (fdxA).